The following is a 583-amino-acid chain: Eukaryotic translation initiation factor 3 subunit D (583 aa).

Residues 116–150 (GRAQRGAGQRGGRAGFQRVGAGRGQGDRFYDNRGG) form a disordered region. Residues 140–149 (QGDRFYDNRG) show a composition bias toward basic and acidic residues. Residues 298-312 (SLDLVTVNENAIDAP) are RNA gate. The segment at 561-583 (NTFEEDEEAAAEEEEQKAEEDEE) is disordered. Acidic residues predominate over residues 563–583 (FEEDEEAAAEEEEQKAEEDEE).

The protein belongs to the eIF-3 subunit D family. As to quaternary structure, component of the eukaryotic translation initiation factor 3 (eIF-3) complex.

Its subcellular location is the cytoplasm. Its function is as follows. mRNA cap-binding component of the eukaryotic translation initiation factor 3 (eIF-3) complex, which is involved in protein synthesis of a specialized repertoire of mRNAs and, together with other initiation factors, stimulates binding of mRNA and methionyl-tRNAi to the 40S ribosome. The eIF-3 complex specifically targets and initiates translation of a subset of mRNAs involved in cell proliferation. In the eIF-3 complex, eif3d specifically recognizes and binds the 7-methylguanosine cap of a subset of mRNAs. This chain is Eukaryotic translation initiation factor 3 subunit D, found in Aspergillus oryzae (strain ATCC 42149 / RIB 40) (Yellow koji mold).